The sequence spans 272 residues: Hydroxyethylthiazole kinase (272 aa).

Position 45 (methionine 45) interacts with substrate. The ATP site is built by arginine 121 and threonine 168. Glycine 195 contacts substrate.

This sequence belongs to the Thz kinase family. Homotrimer. Mg(2+) is required as a cofactor.

It catalyses the reaction 5-(2-hydroxyethyl)-4-methylthiazole + ATP = 4-methyl-5-(2-phosphooxyethyl)-thiazole + ADP + H(+). It participates in cofactor biosynthesis; thiamine diphosphate biosynthesis; 4-methyl-5-(2-phosphoethyl)-thiazole from 5-(2-hydroxyethyl)-4-methylthiazole: step 1/1. Catalyzes the phosphorylation of the hydroxyl group of 4-methyl-5-beta-hydroxyethylthiazole (THZ). The protein is Hydroxyethylthiazole kinase of Bacillus subtilis (strain 168).